A 313-amino-acid chain; its full sequence is HTH-type transcriptional regulator CbbR (313 aa).

The HTH lysR-type domain occupies 1–61 (MRNVTFRQLR…DRTRGGMVPT (61 aa)). Positions 21 to 40 (INLAAEALGLTGPALTLQIQ) form a DNA-binding region, H-T-H motif.

This sequence belongs to the LysR transcriptional regulatory family.

In terms of biological role, transcriptional activator for the cbb operon for RuBisCO and other Calvin cycle genes. The sequence is that of HTH-type transcriptional regulator CbbR (cbbR) from Rhizobium meliloti (strain 1021) (Ensifer meliloti).